Here is a 752-residue protein sequence, read N- to C-terminus: Kaurene synthase like 2, chloroplastic (752 aa).

Residues 1–28 (MSLLLSNSALVGPKFRSSRISHASASLD) constitute a chloroplast transit peptide. Mg(2+) contacts are provided by aspartate 538, aspartate 542, asparagine 682, and glutamate 690. A DDXXD motif motif is present at residues 538 to 542 (DDLFD).

This sequence belongs to the terpene synthase family. Mg(2+) serves as cofactor. In terms of tissue distribution, highly expressed in leaves.

The protein localises to the plastid. It is found in the chloroplast. Its pathway is secondary metabolite biosynthesis; terpenoid biosynthesis. Functionally, involved in the biosynthesis of ent-kaurene diterpenoids natural products such as oridonin, miltiradiene, eriocalyxin B and nezukol, known to exhibit antitumor, anti-inflammatory and antibacterial activities. Catalyzes the conversion of ent-copalyl diphosphate (ent-CPP) to ent-isopimaradiene like compounds. The chain is Kaurene synthase like 2, chloroplastic from Isodon rubescens (Rabdosia rubescens).